Consider the following 377-residue polypeptide: RIB43A-like with coiled-coils protein 2 (377 aa).

The stretch at 188 to 238 forms a coiled coil; it reads ELKFDEAARDLQRLEITTRKAVCAAVKEFNKKQVVELAERKRQVKQQEQED. The disordered stretch occupies residues 355–377; sequence QLDAAPSSQPTEDYFSQFNTRSR. Residues 360-377 show a composition bias toward polar residues; it reads PSSQPTEDYFSQFNTRSR.

The protein belongs to the RIB43A family. In terms of assembly, microtubule inner protein component of sperm flagellar doublet microtubules.

The protein resides in the cytoplasm. Its subcellular location is the cytoskeleton. It is found in the cilium axoneme. The protein localises to the flagellum axoneme. Functionally, microtubule inner protein (MIP) part of the dynein-decorated doublet microtubules (DMTs) in cilia axoneme, which is required for motile cilia beating. In Rattus norvegicus (Rat), this protein is RIB43A-like with coiled-coils protein 2.